Consider the following 231-residue polypeptide: Protein OPG061 (231 aa).

This sequence belongs to the orthopoxvirus OPG058 family.

It localises to the host nucleus. Its subcellular location is the host nucleolus. The sequence is that of Protein OPG061 (OPG061) from Vaccinia virus (strain L-IVP) (VACV).